A 113-amino-acid polypeptide reads, in one-letter code: Endoribonuclease SymE (113 aa).

Positions Ser-29–Pro-74 constitute a SpoVT-AbrB domain.

Belongs to the SymE family.

It localises to the cytoplasm. In terms of biological role, involved in the degradation and recycling of damaged RNA. It is itself a target for degradation by the ATP-dependent protease Lon. The chain is Endoribonuclease SymE from Escherichia coli (strain K12 / MC4100 / BW2952).